The primary structure comprises 467 residues: MSSAPTTPPSVDKVDGFSRKSVRKARQKRSQSSSQFRSQGKPIELTPLPLLKDVPTSEQPELFLKKLQQCCVIFDFMDTLSDLKMKEYKRSTLNELVDYITISRGCLTEQTYPEVVRMVSCNIFRTLPPSDSNEFDPEEDEPTLEASWPHLQLVYEFFIRFLESQEFQPSIAKKYIDQKFVLQLLELFDSEDPRERDYLKTVLHRIYGKFLGLRAFIRKQINNIFLRFVYETEHFNGVAELLEILGSIINGFALPLKAEHKQFLVKVLIPLHTVRSLSLFHAQLAYCIVQFLEKDPSLTEPVIRGLMKFWPKTCSQKEVMFLGELEEILDVIEPSQFVKIQEPLFKQIAKCVSSPHFQVAERALYYWNNEYIMSLIEENSNVILPIMFSSLYRISKEHWNPAIVALVYNVLKAFMEMNSTMFDELTATYKSDRQREKKKEKEREELWKKLEDLELKRGLRRDGIIPT.

The segment at 1 to 39 (MSSAPTTPPSVDKVDGFSRKSVRKARQKRSQSSSQFRSQ) is disordered. S2 carries the post-translational modification N-acetylserine. At T7 the chain carries Phosphothreonine. Basic residues predominate over residues 20 to 29 (KSVRKARQKR). S30, S32, and S34 each carry phosphoserine. Low complexity predominate over residues 30–39 (SQSSSQFRSQ).

This sequence belongs to the phosphatase 2A regulatory subunit B56 family. PP2A consists of a common heterodimeric core enzyme, composed of a 36 kDa catalytic subunit (subunit C) and a 65 kDa constant regulatory subunit (PR65 or subunit A), that associates with a variety of regulatory subunits. Proteins that associate with the core dimer include three families of regulatory subunits B (the R2/B/PR55/B55, R3/B''/PR72/PR130/PR59 and R5/B'/B56 families), the 48 kDa variable regulatory subunit, viral proteins, and cell signaling molecules. Interacts with SGO1. Found in a complex with at least ARL2, PPP2CB; PPP2R1A, PPP2R2A, PPP2R5E and TBCD.

It is found in the cytoplasm. Its function is as follows. The B regulatory subunit might modulate substrate selectivity and catalytic activity, and might also direct the localization of the catalytic enzyme to a particular subcellular compartment. Interacts with cyclin G in vitro. The sequence is that of Serine/threonine-protein phosphatase 2A 56 kDa regulatory subunit epsilon isoform (Ppp2r5e) from Mus musculus (Mouse).